The sequence spans 257 residues: Acyl-[acyl-carrier-protein]--UDP-N-acetylglucosamine O-acyltransferase (257 aa).

It belongs to the transferase hexapeptide repeat family. LpxA subfamily. In terms of assembly, homotrimer.

It is found in the cytoplasm. The enzyme catalyses a (3R)-hydroxyacyl-[ACP] + UDP-N-acetyl-alpha-D-glucosamine = a UDP-3-O-[(3R)-3-hydroxyacyl]-N-acetyl-alpha-D-glucosamine + holo-[ACP]. Its pathway is glycolipid biosynthesis; lipid IV(A) biosynthesis; lipid IV(A) from (3R)-3-hydroxytetradecanoyl-[acyl-carrier-protein] and UDP-N-acetyl-alpha-D-glucosamine: step 1/6. Functionally, involved in the biosynthesis of lipid A, a phosphorylated glycolipid that anchors the lipopolysaccharide to the outer membrane of the cell. The protein is Acyl-[acyl-carrier-protein]--UDP-N-acetylglucosamine O-acyltransferase of Anaeromyxobacter dehalogenans (strain 2CP-1 / ATCC BAA-258).